A 604-amino-acid chain; its full sequence is Threonine--tRNA ligase (604 aa).

A catalytic region spans residues 197-499; sequence DHRKLGRELG…LIEEYAGDFP (303 aa). Zn(2+)-binding residues include Cys296, His347, and His476.

It belongs to the class-II aminoacyl-tRNA synthetase family. As to quaternary structure, homodimer. The cofactor is Zn(2+).

It localises to the cytoplasm. It catalyses the reaction tRNA(Thr) + L-threonine + ATP = L-threonyl-tRNA(Thr) + AMP + diphosphate + H(+). Functionally, catalyzes the attachment of threonine to tRNA(Thr) in a two-step reaction: L-threonine is first activated by ATP to form Thr-AMP and then transferred to the acceptor end of tRNA(Thr). Also edits incorrectly charged L-seryl-tRNA(Thr). In Synechococcus elongatus (strain ATCC 33912 / PCC 7942 / FACHB-805) (Anacystis nidulans R2), this protein is Threonine--tRNA ligase.